The primary structure comprises 330 residues: Phosphate acyltransferase (330 aa).

This sequence belongs to the PlsX family. Homodimer. Probably interacts with PlsY.

It is found in the cytoplasm. The catalysed reaction is a fatty acyl-[ACP] + phosphate = an acyl phosphate + holo-[ACP]. It functions in the pathway lipid metabolism; phospholipid metabolism. Functionally, catalyzes the reversible formation of acyl-phosphate (acyl-PO(4)) from acyl-[acyl-carrier-protein] (acyl-ACP). This enzyme utilizes acyl-ACP as fatty acyl donor, but not acyl-CoA. The chain is Phosphate acyltransferase from Lactobacillus delbrueckii subsp. bulgaricus (strain ATCC BAA-365 / Lb-18).